The primary structure comprises 408 residues: Arginine biosynthesis bifunctional protein ArgJ (408 aa).

Threonine 156, lysine 182, threonine 193, glutamate 279, asparagine 403, and serine 408 together coordinate substrate. The active-site Nucleophile is threonine 193.

The protein belongs to the ArgJ family. In terms of assembly, heterotetramer of two alpha and two beta chains.

The protein resides in the cytoplasm. It catalyses the reaction N(2)-acetyl-L-ornithine + L-glutamate = N-acetyl-L-glutamate + L-ornithine. It carries out the reaction L-glutamate + acetyl-CoA = N-acetyl-L-glutamate + CoA + H(+). It participates in amino-acid biosynthesis; L-arginine biosynthesis; L-ornithine and N-acetyl-L-glutamate from L-glutamate and N(2)-acetyl-L-ornithine (cyclic): step 1/1. Its pathway is amino-acid biosynthesis; L-arginine biosynthesis; N(2)-acetyl-L-ornithine from L-glutamate: step 1/4. In terms of biological role, catalyzes two activities which are involved in the cyclic version of arginine biosynthesis: the synthesis of N-acetylglutamate from glutamate and acetyl-CoA as the acetyl donor, and of ornithine by transacetylation between N(2)-acetylornithine and glutamate. This chain is Arginine biosynthesis bifunctional protein ArgJ, found in Dechloromonas aromatica (strain RCB).